A 479-amino-acid polypeptide reads, in one-letter code: T-box transcription factor TBX1 (479 aa).

2 stretches are compositionally biased toward low complexity: residues 15–31 and 59–86; these read ASSLSGLGSPSPGADPF and YPFAPAPGAAGSSAAESEGPGASRAAAV. The interval 15–86 is disordered; that stretch reads ASSLSGLGSP…GPGASRAAAV (72 aa). The segment at residues 108–286 is a DNA-binding region (T-box); it reads LWDEFNQLGT…SNPFAKGFRD (179 aa). Residues 311–398 form a disordered region; it reads RNPVASPTQP…APGASEPLHH (88 aa). Residues 313–322 are compositionally biased toward polar residues; sequence PVASPTQPNG. Basic and acidic residues predominate over residues 323 to 338; it reads SDKDAAEARREFDRDS. Residues 415-426 carry the Nuclear localization signal motif; it reads KSRPAPYPLPGL.

In terms of assembly, binds DNA as a dimer. Interacts with DSCR6. Interacts with NKX2-5. Expressed in skeletal muscle, lung and testis. Highly expressed in hair follicle stem cell, but not in terminally differentiating cells.

The protein localises to the nucleus. Its function is as follows. Transcription factor that plays a key role in cardiovascular development by promoting pharyngeal arch segmentation during embryonic development. Also involved in craniofacial muscle development. Together with NKX2-5, acts as a regulator of asymmetric cardiac morphogenesis by promoting expression of PITX2. Acts upstream of TBX1 for the formation of the thymus and parathyroid glands from the third pharyngeal pouch. Required for hair follicle stem cell self-renewal. Binds to the palindromic T site 5'-TTCACACCTAGGTGTGAA-3' DNA sequence. The chain is T-box transcription factor TBX1 from Mus musculus (Mouse).